A 140-amino-acid chain; its full sequence is MSMKYLMLLFAAMIIRSFANSGNAIETTLSEITNTTTDIPAIRLCGPEGDRYCFHGICIHARDIDGMYCRCSHGYTGIRCQHVVLVDYQRSEKPNTTTSYIPSPGIVLVLLVSIIVCCLLFVYRFTRRTNKLPLQDMVVP.

An N-terminal signal peptide occupies residues 1-18 (MSMKYLMLLFAAMIIRSF). The Extracellular segment spans residues 19 to 100 (ANSGNAIETT…SEKPNTTTSY (82 aa)). The N-linked (GlcNAc...) asparagine; by host glycan is linked to N34. In terms of domain architecture, EGF-like spans 41–81 (AIRLCGPEGDRYCFHGICIHARDIDGMYCRCSHGYTGIRCQ). Intrachain disulfides connect C45–C58, C53–C69, and C71–C80. N-linked (GlcNAc...) asparagine; by host glycosylation is present at N95. The chain crosses the membrane as a helical span at residues 101 to 121 (IPSPGIVLVLLVSIIVCCLLF). Residues 122-140 (VYRFTRRTNKLPLQDMVVP) lie on the Cytoplasmic side of the membrane.

This sequence belongs to the orthopoxvirus OPG019 family. As to quaternary structure, variola growth factor interacts with host EGFR and promotes EGFR dimerization.

The protein resides in the host membrane. It is found in the secreted. Stimulates cellular proliferation (hyperplasia)and mobility around infected cells to promote rapid and efficient spread of infection. This effect is beneficial for virus replication in vivo, because poxviruses replicate possibly better in proliferating cells than in quiescent cells. Acts by binding host EGFR, inducing its dimerization, autophosphorylation and leading to activation of several cellular pathways regulating cell proliferation or cell survival. The activation by host EGFR of mitogen activated protein kinases (MAPK) and extracellular-signal regulated kinases (ERK) are essential for the positive effect of vaccinia growth factor on poxvirus virulence in vivo. The protein is Pro-variola growth factor (OPG019) of Variola virus (isolate Human/India/Ind3/1967) (VARV).